A 572-amino-acid chain; its full sequence is MRTSQYLFSTLKETPNDAQVVSHQLMLRAGMIRPMASGLYNWLPTGIRVLKKVEKVVREEMNKGGAIEVLMPVVQPAELWEESGRWDQYGPELLRFEDRGNRNFVLGPTHEEVITDLVRREVSSYKQLPLNLYQIQTKFRDEVRPRFGVMRSREFIMKDAYSFHTTQESLQATYDVMYQVYSNIFNRLGLDFRAVQADTGSIGGSASHEFQVLASSGEDDVVFSTESDFAANIELAEAIAIGERQAPTAEMCLVDTPNAKTIAELVEQFNLPIEKTVKTLIVKGADENQPLVALIIRGDHELNEIKAQKHPLVADPLEFADETEIKAKIGSGVGSLGAVNLNIPAIIDRTVALMSDFSCGANIDGKHYFNVNWERDVAIPKVFDLRNVVEGDPSPDGKGTLQIKRGIEVGHIFQLGKKYSEAMKATVQGEDGKPLVMTMGCYGIGVTRVVASAIEQHHDERGIIWPSDEIAPFTVAIVPMNMHKSEAVQKYAEELYRTLQSQGVDVIFDDRKERPGVMFADMELIGVPHMVVIGEKNLDNGEIEYKNRRTGEKEMISKDKLLSVLNEKLGNL.

This sequence belongs to the class-II aminoacyl-tRNA synthetase family. ProS type 1 subfamily. In terms of assembly, homodimer. May form a tertiary complex with YbaK and t-RNA(Pro).

The protein localises to the cytoplasm. It catalyses the reaction tRNA(Pro) + L-proline + ATP = L-prolyl-tRNA(Pro) + AMP + diphosphate. Functionally, catalyzes the attachment of proline to tRNA(Pro) in a two-step reaction: proline is first activated by ATP to form Pro-AMP and then transferred to the acceptor end of tRNA(Pro). As ProRS can inadvertently accommodate and process non-cognate amino acids such as alanine and cysteine, to avoid such errors it has two additional distinct editing activities against alanine. One activity is designated as 'pretransfer' editing and involves the tRNA(Pro)-independent hydrolysis of activated Ala-AMP. The other activity is designated 'posttransfer' editing and involves deacylation of mischarged Ala-tRNA(Pro). The misacylated Cys-tRNA(Pro) is not edited by ProRS, but is probably edited in trans by YbaK. The protein is Proline--tRNA ligase of Haemophilus influenzae (strain ATCC 51907 / DSM 11121 / KW20 / Rd).